Consider the following 214-residue polypeptide: Large ribosomal subunit protein uL16 (214 aa).

The protein belongs to the universal ribosomal protein uL16 family. In terms of assembly, component of the large ribosomal subunit. Mature ribosomes consist of a small (40S) and a large (60S) subunit. The 40S subunit contains about 33 different proteins and 1 molecule of RNA (18S). The 60S subunit contains about 49 different proteins and 3 molecules of RNA (28S, 5.8S and 5S).

The protein is Large ribosomal subunit protein uL16 (rpl-10L) of Caenorhabditis elegans.